Reading from the N-terminus, the 179-residue chain is MSTSHDRAVLNQILNPLMPTSDSGIAEIHLESDSLEHPGYELSLQLEREGVALAEGVRLDEAIEKFTKALEVCPKNPSAYNNRAQAYRLQNKPEKALDDLNEALSLAGPKTKTACQAYVQRASIYRLRGDDDKARTDFASAAELGSSFAKMQLVALNPYAAMCNKMLAEVFEKAKTGED.

TPR repeat units follow at residues 43-76, 78-110, and 115-148; these read SLQL…CPKN, SAYN…AGPK, and CQAY…GSSF.

This sequence belongs to the TTC36 family.

This chain is Tetratricopeptide repeat protein 36, found in Caenorhabditis elegans.